A 433-amino-acid polypeptide reads, in one-letter code: Putative ankyrin repeat protein R784 (433 aa).

ANK repeat units follow at residues 44–70, 71–101, 102–131, 179–205, 206–235, 237–264, 265–294, 296–321, 322–351, and 380–409; these read NQNL…KTDV, NGLK…NNDL, LDLH…IVII, FYDS…NQCS, VRQK…RIFS, RRLI…IDLA, QNNF…DIHF, NGEC…NKVY, MSEK…ACMS, and NMRK…KLRE.

The protein is Putative ankyrin repeat protein R784 of Acanthamoeba polyphaga mimivirus (APMV).